Consider the following 182-residue polypeptide: UPF0316 protein BCQ_3166 (182 aa).

A run of 3 helical transmembrane segments spans residues 6-26 (LIFV…ILLV), 32-52 (SAAA…GIVF), and 58-78 (WMNI…GGYI).

This sequence belongs to the UPF0316 family.

The protein localises to the cell membrane. The polypeptide is UPF0316 protein BCQ_3166 (Bacillus cereus (strain Q1)).